Consider the following 395-residue polypeptide: S-adenosylmethionine synthase (395 aa).

His-14 lines the ATP pocket. A Mg(2+)-binding site is contributed by Asp-16. Residue Glu-42 coordinates K(+). L-methionine-binding residues include Glu-55 and Gln-98. A flexible loop region spans residues 98 to 108 (QSPDIAMGVNK). Residues 174-176 (DGK), 240-241 (RF), Asp-249, 255-256 (RK), Ala-272, and Lys-276 each bind ATP. Asp-249 serves as a coordination point for L-methionine. Lys-280 is a binding site for L-methionine.

The protein belongs to the AdoMet synthase family. As to quaternary structure, homotetramer; dimer of dimers. Requires Mg(2+) as cofactor. K(+) is required as a cofactor.

The protein resides in the cytoplasm. It catalyses the reaction L-methionine + ATP + H2O = S-adenosyl-L-methionine + phosphate + diphosphate. It participates in amino-acid biosynthesis; S-adenosyl-L-methionine biosynthesis; S-adenosyl-L-methionine from L-methionine: step 1/1. Catalyzes the formation of S-adenosylmethionine (AdoMet) from methionine and ATP. The overall synthetic reaction is composed of two sequential steps, AdoMet formation and the subsequent tripolyphosphate hydrolysis which occurs prior to release of AdoMet from the enzyme. This Caldanaerobacter subterraneus subsp. tengcongensis (strain DSM 15242 / JCM 11007 / NBRC 100824 / MB4) (Thermoanaerobacter tengcongensis) protein is S-adenosylmethionine synthase.